The chain runs to 302 residues: N-acetylmuramic acid 6-phosphate etherase (302 aa).

Positions 57–220 (IADRFRSNGR…TTGAMIRIGK (164 aa)) constitute an SIS domain. E85 (proton donor) is an active-site residue. E116 is an active-site residue.

It belongs to the GCKR-like family. MurNAc-6-P etherase subfamily. In terms of assembly, homodimer.

It catalyses the reaction N-acetyl-D-muramate 6-phosphate + H2O = N-acetyl-D-glucosamine 6-phosphate + (R)-lactate. Its pathway is amino-sugar metabolism; N-acetylmuramate degradation. Specifically catalyzes the cleavage of the D-lactyl ether substituent of MurNAc 6-phosphate, producing GlcNAc 6-phosphate and D-lactate. The chain is N-acetylmuramic acid 6-phosphate etherase from Rhodopirellula baltica (strain DSM 10527 / NCIMB 13988 / SH1).